The sequence spans 609 residues: Hemagglutinin glycoprotein (609 aa).

Over 1–34 (MSSPRDRVNAFYKDNLQFKNTRVVLNKEQLLIER) the chain is Intravirion. A helical; Signal-anchor for type II membrane protein transmembrane segment spans residues 35–58 (PYMLLAVLFVMFLSLVGLLAIAGI). Over 59–609 (RLHRAAVNTA…VGIEITCNSR (551 aa)) the chain is Virion surface. 4 N-linked (GlcNAc...) asparagine; by host glycosylation sites follow: N168, N200, N215, and N395.

It belongs to the paramyxoviruses hemagglutinin-neuraminidase family. Non-sialidase subfamily.

It is found in the virion membrane. It localises to the host membrane. Functionally, attaches the virus to cell receptors and thereby initiating infection. Binding of H protein to the receptor induces a conformational change that allows the F protein to trigger virion/cell membranes fusion. Down-regulates human MCP/CD46 cell surface expression. The polypeptide is Hemagglutinin glycoprotein (H) (Rinderpest virus (strain L) (RDV)).